Consider the following 233-residue polypeptide: Purine nucleoside phosphorylase DeoD-type (233 aa).

A purine D-ribonucleoside is bound at residue His4. Residues Gly20, Arg24, Arg43, and 87–90 (RIGT) contribute to the phosphate site. Residues 179–181 (EME) and 203–204 (SD) each bind a purine D-ribonucleoside. Asp204 functions as the Proton donor in the catalytic mechanism.

This sequence belongs to the PNP/UDP phosphorylase family. Homohexamer; trimer of homodimers.

The catalysed reaction is a purine D-ribonucleoside + phosphate = a purine nucleobase + alpha-D-ribose 1-phosphate. It catalyses the reaction a purine 2'-deoxy-D-ribonucleoside + phosphate = a purine nucleobase + 2-deoxy-alpha-D-ribose 1-phosphate. Functionally, catalyzes the reversible phosphorolytic breakdown of the N-glycosidic bond in the beta-(deoxy)ribonucleoside molecules, with the formation of the corresponding free purine bases and pentose-1-phosphate. The polypeptide is Purine nucleoside phosphorylase DeoD-type (Helicobacter pylori (strain G27)).